The primary structure comprises 130 residues: Keratin, high-sulfur matrix protein, IIIA3A (130 aa).

As to expression, wool.

Functionally, the keratin products of mammalian epidermal derivatives such as wool and hair consist of microfibrils embedded in a rigid matrix of other proteins. The matrix proteins include the high-sulfur and high-tyrosine keratins, having molecular weights of 6-20 kDa, whereas the microfibrils contain the larger, low-sulfur keratins (40-56 kDa). The chain is Keratin, high-sulfur matrix protein, IIIA3A from Ovis aries (Sheep).